Consider the following 347-residue polypeptide: Heat-inducible transcription repressor HrcA (347 aa).

The protein belongs to the HrcA family.

Functionally, negative regulator of class I heat shock genes (grpE-dnaK-dnaJ and groELS operons). Prevents heat-shock induction of these operons. The protein is Heat-inducible transcription repressor HrcA of Rhodococcus jostii (strain RHA1).